The chain runs to 101 residues: uncharacterized protein (101 aa).

The next 3 helical transmembrane spans lie at 10–32, 45–67, and 77–99; these read FLPN…FFLY, LGIW…LPLI, and IAFT…ILSH.

The protein localises to the cell membrane. This is an uncharacterized protein from Bacillus subtilis (strain 168).